Consider the following 468-residue polypeptide: MRRFCVVPLLLVLVEAAQKSDLGGDASAALINHSPMLIQRLQDLFHKGNSTDTILRIRTANSDEVKVIHVHQLLLTLQSDIFDGLLLNQSEVTLQEPAECAALFEKFIRYFYCGEISVNLNQAIPLHRLANKYHMTALQRGVTEYMKTHFSSESAQGHVVSWYHYALRMGDINLQESCLKFLAWNLSTIMSSNEWVTVSDKLMVSLLQRSDLVLQSELELFSAVEEWISKNKPDAPVIEKVLRSIRYPMISPSQLFQIQKESAVLASYHNSVQDLMFQAFQFHSASPLHFAKYFDVNCSMFVPRNYLSPSWGSQWIINNPARDDRSLTFQTQLGPSNHDTSKKMTWNALFSPRWLPVSLRPVYSESIPSSSQSNRLEEGKPRLVVTSAMSGMDFAGVTFQKTLLVGVKRQQSKVFVKHVYNVHQSTDEVFDFLLQADLQKRTSEYLIDNSLHLHIIIKPIYHSLIKAK.

Positions 1–16 are cleaved as a signal peptide; the sequence is MRRFCVVPLLLVLVEA. Positions 51-120 constitute a BTB domain; it reads TDTILRIRTA…FYCGEISVNL (70 aa). The BACK domain occupies 159 to 259; sequence VVSWYHYALR…ISPSQLFQIQ (101 aa).

It localises to the secreted. In Xenopus tropicalis (Western clawed frog), this protein is BTB/POZ domain-containing protein 17 (btbd17).